Here is a 395-residue protein sequence, read N- to C-terminus: LL-diaminopimelate aminotransferase (395 aa).

Positions 14 and 41 each coordinate substrate. Pyridoxal 5'-phosphate-binding positions include Tyr-71, 104–105, Tyr-128, Asn-174, Tyr-205, and 233–235; these read AK and SFS. Substrate-binding residues include Lys-105, Tyr-128, and Asn-174. An N6-(pyridoxal phosphate)lysine modification is found at Lys-236. Residues Arg-244 and Asn-275 each contribute to the pyridoxal 5'-phosphate site. 2 residues coordinate substrate: Asn-275 and Arg-368.

This sequence belongs to the class-I pyridoxal-phosphate-dependent aminotransferase family. LL-diaminopimelate aminotransferase subfamily. As to quaternary structure, homodimer. Pyridoxal 5'-phosphate is required as a cofactor.

The catalysed reaction is (2S,6S)-2,6-diaminopimelate + 2-oxoglutarate = (S)-2,3,4,5-tetrahydrodipicolinate + L-glutamate + H2O + H(+). Its pathway is amino-acid biosynthesis; L-lysine biosynthesis via DAP pathway; LL-2,6-diaminopimelate from (S)-tetrahydrodipicolinate (aminotransferase route): step 1/1. Its function is as follows. Involved in the synthesis of meso-diaminopimelate (m-DAP or DL-DAP), required for both lysine and peptidoglycan biosynthesis. Catalyzes the direct conversion of tetrahydrodipicolinate to LL-diaminopimelate. The chain is LL-diaminopimelate aminotransferase from Chlamydia caviae (strain ATCC VR-813 / DSM 19441 / 03DC25 / GPIC) (Chlamydophila caviae).